The sequence spans 519 residues: Na(+)/H(+) exchange regulatory cofactor NHE-RF3 (519 aa).

PDZ domains follow at residues 9–90, 134–215, and 243–323; these read ECKL…LDGD, RLCY…VDKE, and IVEM…VDKE. Residues Ser-148, Ser-192, Ser-250, Ser-334, and Ser-348 each carry the phosphoserine modification. The interval 347 to 374 is disordered; the sequence is GSVKEAPAPTPTSLEVSSPPDTTEEVDH. Residues 357–367 show a composition bias toward polar residues; that stretch reads PTSLEVSSPPD. Positions 378–458 constitute a PDZ 4 domain; the sequence is LCRLAKGENG…NVTLLVCGKK (81 aa). Phosphothreonine is present on Thr-451. Residues 473–519 form a disordered region; it reads SLADPPDTPPDSKEGIVVESKHDSHMAKERAHSTASHSSSNSEDTEM. Basic and acidic residues predominate over residues 482-504; that stretch reads PDSKEGIVVESKHDSHMAKERAH. Phosphoserine is present on residues Ser-492, Ser-508, Ser-510, Ser-511, Ser-512, and Ser-514. The segment covering 505–519 has biased composition (low complexity); the sequence is STASHSSSNSEDTEM.

Belongs to the NHER family. As to quaternary structure, interacts with PDZK1IP1 and ABCC2. Binds to the C-terminal region of SLC26A3. Interacts (via PDZ domains 1 and 3) with SCARB1 (C-terminal domain). Forms a heterodimeric complex with NHERF1. Interacts with AKAP2, BCR, CFTR, SLCO1A1, SLC22A12, SLC22A4, SLC22A5, NHERF2 and SLC17A1. Component of a complex, composed of PDZK1, SYNGAP1, KLHL17 and NMDA receptors. Interacts (via PDZ1 domain) directly with KLHL17; the interaction is important for integrity of actin cytoskeleton structures in neurons. Interacts (via C-terminal PDZ domain) with SLC26A6 (via C-terminal domain). Interacts (via C-terminal PDZ domain) with SLC9A3 (via C-terminal domain). Interacts (via the first PDZ domain) with PTGIR (via non-isoprenylated C-terminus). Interacts (via PDZ domains 1 and 3) with SLC5A8 (via PDZ-binding motif); interaction increases nicotinate transport activity of SLC5A8.

It is found in the membrane. The protein resides in the cell membrane. Functionally, a scaffold protein that connects plasma membrane proteins and regulatory components, regulating their surface expression in epithelial cells apical domains. May be involved in the coordination of a diverse range of regulatory processes for ion transport and second messenger cascades. In complex with NHERF1, may cluster proteins that are functionally dependent in a mutual fashion and modulate the trafficking and the activity of the associated membrane proteins. May play a role in the cellular mechanisms associated with multidrug resistance through its interaction with ABCC2 and PDZK1IP1. May potentiate the CFTR chloride channel activity. Required for normal cell-surface expression of SCARB1. Plays a role in maintaining normal plasma cholesterol levels via its effects on SCARB1. Plays a role in the normal localization and function of the chloride-anion exchanger SLC26A6 to the plasma membrane in the brush border of the proximal tubule of the kidney. May be involved in the regulation of proximal tubular Na(+)-dependent inorganic phosphate cotransport therefore playing an important role in tubule function. The protein is Na(+)/H(+) exchange regulatory cofactor NHE-RF3 (PDZK1) of Pongo abelii (Sumatran orangutan).